Consider the following 817-residue polypeptide: Dynamin-related protein 5A (817 aa).

Residues 1-20 (MANSNTYLTTPTKTPSSRRN) are compositionally biased toward polar residues. The interval 1–37 (MANSNTYLTTPTKTPSSRRNQQSQSKMQSHSKDPINA) is disordered. The 288-residue stretch at 59-346 (KLPIPEIVAI…LQKRYKEAAP (288 aa)) folds into the Dynamin-type G domain. Residues 69–76 (GGQSDGKS) are G1 motif. 69-76 (GGQSDGKS) contacts GTP. Residues 95-97 (GTR) are G2 motif. The interval 175–178 (DTPG) is G3 motif. GTP is bound by residues 175–179 (DTPGF) and 244–247 (SKFD). The G4 motif stretch occupies residues 244 to 247 (SKFD). Positions 280-283 (LPKD) are G5 motif. Disordered regions lie at residues 405–425 (APEQ…IGSW) and 616–658 (LSDT…ETPS). Residues 618–629 (DTSRDEPMKDQE) are compositionally biased toward basic and acidic residues.

It belongs to the TRAFAC class dynamin-like GTPase superfamily. Dynamin/Fzo/YdjA family. In terms of tissue distribution, expressed in root and leaf meristems.

It is found in the cytoplasm. Its subcellular location is the cytoskeleton. The protein localises to the phragmoplast. In terms of biological role, probable microtubule-associated force-producing protein that is targeted to the forming cell plate during cytokinesis. May play a role in cell division. This is Dynamin-related protein 5A (DRP5A) from Arabidopsis thaliana (Mouse-ear cress).